The sequence spans 337 residues: Pyridoxal 5'-phosphate synthase subunit PdxS (337 aa).

Asp-63 is a binding site for D-ribose 5-phosphate. Residue Lys-120 is the Schiff-base intermediate with D-ribose 5-phosphate of the active site. Residue Gly-192 coordinates D-ribose 5-phosphate. Lys-204 contacts D-glyceraldehyde 3-phosphate. D-ribose 5-phosphate contacts are provided by residues Gly-253 and 274-275 (GS).

It belongs to the PdxS/SNZ family. In the presence of PdxT, forms a dodecamer of heterodimers.

The catalysed reaction is aldehydo-D-ribose 5-phosphate + D-glyceraldehyde 3-phosphate + L-glutamine = pyridoxal 5'-phosphate + L-glutamate + phosphate + 3 H2O + H(+). Its pathway is cofactor biosynthesis; pyridoxal 5'-phosphate biosynthesis. Its function is as follows. Catalyzes the formation of pyridoxal 5'-phosphate from ribose 5-phosphate (RBP), glyceraldehyde 3-phosphate (G3P) and ammonia. The ammonia is provided by the PdxT subunit. Can also use ribulose 5-phosphate and dihydroxyacetone phosphate as substrates, resulting from enzyme-catalyzed isomerization of RBP and G3P, respectively. The protein is Pyridoxal 5'-phosphate synthase subunit PdxS of Aeropyrum pernix (strain ATCC 700893 / DSM 11879 / JCM 9820 / NBRC 100138 / K1).